The chain runs to 474 residues: Aspartyl/glutamyl-tRNA(Asn/Gln) amidotransferase subunit B (474 aa).

The protein belongs to the GatB/GatE family. GatB subfamily. Heterotrimer of A, B and C subunits.

It carries out the reaction L-glutamyl-tRNA(Gln) + L-glutamine + ATP + H2O = L-glutaminyl-tRNA(Gln) + L-glutamate + ADP + phosphate + H(+). The enzyme catalyses L-aspartyl-tRNA(Asn) + L-glutamine + ATP + H2O = L-asparaginyl-tRNA(Asn) + L-glutamate + ADP + phosphate + 2 H(+). Allows the formation of correctly charged Asn-tRNA(Asn) or Gln-tRNA(Gln) through the transamidation of misacylated Asp-tRNA(Asn) or Glu-tRNA(Gln) in organisms which lack either or both of asparaginyl-tRNA or glutaminyl-tRNA synthetases. The reaction takes place in the presence of glutamine and ATP through an activated phospho-Asp-tRNA(Asn) or phospho-Glu-tRNA(Gln). The protein is Aspartyl/glutamyl-tRNA(Asn/Gln) amidotransferase subunit B of Lactiplantibacillus plantarum (strain ATCC BAA-793 / NCIMB 8826 / WCFS1) (Lactobacillus plantarum).